A 424-amino-acid polypeptide reads, in one-letter code: Adenylosuccinate synthetase (424 aa).

GTP-binding positions include 12–18 (GDEGKGK) and 40–42 (GHT). Asp-13 acts as the Proton acceptor in catalysis. Mg(2+)-binding residues include Asp-13 and Gly-40. Residues 13-16 (DEGK), 38-41 (NAGH), Thr-130, Arg-144, Asn-220, Thr-235, and Arg-299 contribute to the IMP site. His-41 acts as the Proton donor in catalysis. 295–301 (VTTGRRR) contacts substrate. GTP is bound by residues Arg-301, 327–329 (KLD), and 412–414 (GTG).

Belongs to the adenylosuccinate synthetase family. As to quaternary structure, homodimer. Mg(2+) is required as a cofactor.

The protein localises to the cytoplasm. The catalysed reaction is IMP + L-aspartate + GTP = N(6)-(1,2-dicarboxyethyl)-AMP + GDP + phosphate + 2 H(+). Its pathway is purine metabolism; AMP biosynthesis via de novo pathway; AMP from IMP: step 1/2. Functionally, plays an important role in the de novo pathway and in the salvage pathway of purine nucleotide biosynthesis. Catalyzes the first committed step in the biosynthesis of AMP from IMP. This chain is Adenylosuccinate synthetase, found in Aspergillus flavus (strain ATCC 200026 / FGSC A1120 / IAM 13836 / NRRL 3357 / JCM 12722 / SRRC 167).